A 333-amino-acid chain; its full sequence is Glutamyl-tRNA reductase (333 aa).

Substrate is bound by residues 60-63 (TCHR), serine 110, 115-117 (ETE), and glutamine 121. The Nucleophile role is filled by cysteine 61. Residue 189-194 (GYSEIN) coordinates NADP(+).

Belongs to the glutamyl-tRNA reductase family. As to quaternary structure, homodimer.

It catalyses the reaction (S)-4-amino-5-oxopentanoate + tRNA(Glu) + NADP(+) = L-glutamyl-tRNA(Glu) + NADPH + H(+). Its pathway is porphyrin-containing compound metabolism; protoporphyrin-IX biosynthesis; 5-aminolevulinate from L-glutamyl-tRNA(Glu): step 1/2. Functionally, catalyzes the NADPH-dependent reduction of glutamyl-tRNA(Glu) to glutamate 1-semialdehyde (GSA). The chain is Glutamyl-tRNA reductase from Chlamydia muridarum (strain MoPn / Nigg).